Here is a 653-residue protein sequence, read N- to C-terminus: Protein fem-1 homolog A (653 aa).

ANK repeat units lie at residues 2-31, 40-70, 82-111, 115-145, 149-178, 182-211, and 214-243; these read DLHTAVYNAARDGKLQLLQKLLSGRSREEL, SGGTPLLIAARYGHLDVVEYLVDRCGASVEA, EGAPPLWAASAAGHLDVVRSLLRRGASVNR, TNSTPLRAACFDGHLEVVRYLVGEHQADLEV, HGHTCLMISCYKGHREIARYLLEQGAQVNR, KGNTALHDCAESGSLEILQLLLGCNARMER, and YGMTPLLAASVTGHTNIVEYLIQEQPAGDE. At Ser-108 the chain carries Phosphoserine. Positions 242-274 are disordered; that stretch reads DEQAQPGLARVQPQGARSSPEEPPSGESYESCC. 2 TPR repeats span residues 282-316 and 374-407; these read VEALELLGATYVDKKRDLLGALKHWRRAMELRHQG and SYYIRYRGAVYADSGNFERCIRLWKYALDMQQNN. ANK repeat units follow at residues 518 to 560 and 564 to 593; these read NGFT…DPDS and DNNTPLHIAAQNNCPGIMNALIEAGAHMDA.

It belongs to the fem-1 family. Component of a CRL2 E3 ubiquitin-protein ligase complex, also named ECS (Elongin BC-CUL2/5-SOCS-box protein) complex, composed of CUL2, Elongin BC (ELOB and ELOC), RBX1 and substrate-specific adapter FEM1A. Interacts with PTGER4. Interacts with NFKB1; the interaction is direct. Post-translationally, phosphorylated; highly phosphorylated in myoblasts and myotubes. Phosphorylation at Ser-108 promotes PGE2-EP4-mediated inhibition of inflammation. Dephosphorylated by protein phosphatase 2A (PP2A).

The protein localises to the mitochondrion. Its subcellular location is the cytoplasm. The protein operates within protein modification; protein ubiquitination. In terms of biological role, substrate-recognition component of a Cul2-RING (CRL2) E3 ubiquitin-protein ligase complex of the DesCEND (destruction via C-end degrons) pathway, which recognizes a C-degron located at the extreme C terminus of target proteins, leading to their ubiquitination and degradation. The C-degron recognized by the DesCEND pathway is usually a motif of less than ten residues and can be present in full-length proteins, truncated proteins or proteolytically cleaved forms. The CRL2(FEM1A) complex specifically recognizes proteins with an arginine at the C-terminus: recognizes and binds proteins ending with -Lys/Arg-Xaa-Arg and -Lys/Arg-Xaa-Xaa-Arg C-degrons, such as SIL1 or OR51B2, leading to their ubiquitination and degradation. Involved in PGE2-EP4-mediated inhibition of inflammation of macrophages via interaction with NFKB1 and PTGER4. Promotes inflammation in brain microglia through MAP2K4/MKK4-mediated signaling. This is Protein fem-1 homolog A from Bos taurus (Bovine).